A 365-amino-acid chain; its full sequence is tRNA-specific 2-thiouridylase MnmA (365 aa).

ATP-binding positions include 14–21 (AMSGGVDS) and Leu40. The Nucleophile role is filled by Cys108. Cys108 and Cys204 form a disulfide bridge. Position 132 (Gly132) interacts with ATP. Positions 154-156 (KDQ) are interaction with tRNA. The active-site Cysteine persulfide intermediate is Cys204.

It belongs to the MnmA/TRMU family.

Its subcellular location is the cytoplasm. The catalysed reaction is S-sulfanyl-L-cysteinyl-[protein] + uridine(34) in tRNA + AH2 + ATP = 2-thiouridine(34) in tRNA + L-cysteinyl-[protein] + A + AMP + diphosphate + H(+). Functionally, catalyzes the 2-thiolation of uridine at the wobble position (U34) of tRNA, leading to the formation of s(2)U34. This Rickettsia massiliae (strain Mtu5) protein is tRNA-specific 2-thiouridylase MnmA.